Reading from the N-terminus, the 538-residue chain is Telomerase Cajal body protein 1 (538 aa).

Residues 1–53 are disordered; sequence MKTSEERLVVPDSLSSDQAPAPVPQGSPVDENTDSEPVPQPCGGDDRSQVAAD. Phosphoserine occurs at positions 27 and 87. Residues 92–128 form a disordered region; sequence EQELSENVSLPVEDTNQPELASGEDVEGVSEEPGPVD. A compositionally biased stretch (acidic residues) spans 113–128; the sequence is SGEDVEGVSEEPGPVD. 6 WD repeats span residues 154-194, 210-255, 260-301, 311-352, 353-393, and 399-438; these read AHSE…YSAT, EGDT…LRAS, NHLD…RDCE, GQSG…ALLG, GHQG…HLLW, and VTTNQRIYFDLDPSGQFLVSGNTNGMVSVWDISGAFGDSS. Disordered regions lie at residues 471 to 491 and 509 to 538; these read QRMFPEPTNSGDEGEPEGDLP and CGGGPDPSSPNDPQDEKGQGRAEGCGDGLI. Position 478 is a phosphothreonine (threonine 478). The residue at position 480 (serine 480) is a Phosphoserine. Gly residues predominate over residues 529–538; the sequence is RAEGCGDGLI.

It belongs to the TCAB1 family. As to quaternary structure, component of the telomerase holoenzyme complex composed of one molecule of TERT, one molecule of WRAP53/TCAB1, two molecules of H/ACA ribonucleoprotein complex subunits DKC1, NOP10, NHP2 and GAR1, and a telomerase RNA template component (TERC). The telomerase holoenzyme complex is associated with TEP1, SMG6/EST1A and POT1. Interacts with the chaperonin-containing T-complex (TRiC) complex; which mediates the folding of WRAP53/TCAB1. Interacts with COIL. Interacts with SMN1. Interacts with RNF8. Interacts with histone H2AX. In terms of tissue distribution, preferentially expressed in testis.

The protein localises to the nucleus. The protein resides in the cajal body. Its subcellular location is the chromosome. It localises to the telomere. Functionally, RNA chaperone that plays a key role in telomere maintenance and RNA localization to Cajal bodies. Specifically recognizes and binds the Cajal body box (CAB box) present in both small Cajal body RNAs (scaRNAs) and telomerase RNA template component (TERC). Essential component of the telomerase holoenzyme complex, a ribonucleoprotein complex essential for the replication of chromosome termini that elongates telomeres in most eukaryotes. In the telomerase holoenzyme complex, required to stimulate the catalytic activity of the complex. Acts by specifically binding the CAB box of the TERC RNA and controlling the folding of the CR4/CR5 region of the TERC RNA, a critical step for telomerase activity. In addition, also controls telomerase holoenzyme complex localization to Cajal body. During S phase, required for delivery of TERC to telomeres during S phase and for telomerase activity. In addition to its role in telomere maintenance, also required for Cajal body formation, probably by mediating localization of scaRNAs to Cajal bodies. Also plays a role in DNA repair: relocalizes to sites of DNA double-strand breaks in response to DNA damage and promotes the repair of DNA double-strand breaks. Acts by recruiting the ubiquitin ligase RNF8 to DNA breaks and promote both homologous recombination (HR) and non-homologous end joining (NHEJ). The protein is Telomerase Cajal body protein 1 of Mesocricetus auratus (Golden hamster).